A 312-amino-acid chain; its full sequence is Malate dehydrogenase (312 aa).

Residues 7–13 (GAAGGIG) and Asp34 each bind NAD(+). Substrate-binding residues include Arg81 and Arg87. Residues Asn94 and 117–119 (ITN) each bind NAD(+). 2 residues coordinate substrate: Asn119 and Arg153. His177 (proton acceptor) is an active-site residue. NAD(+) is bound at residue Met227.

Belongs to the LDH/MDH superfamily. MDH type 1 family. Homodimer.

The enzyme catalyses (S)-malate + NAD(+) = oxaloacetate + NADH + H(+). Its function is as follows. Catalyzes the reversible oxidation of malate to oxaloacetate. The chain is Malate dehydrogenase from Salmonella newport (strain SL254).